A 362-amino-acid chain; its full sequence is Porin Omp2b (362 aa).

The N-terminal stretch at 1–22 (MNIKSLLLGSAAALVAASGAQA) is a signal peptide.

It belongs to the alphaproteobacteria porin family. In terms of assembly, homotrimer.

The protein resides in the cell outer membrane. Functionally, forms passive diffusion pores that allow small molecular weight hydrophilic materials across the outer membrane. This Brucella canis (strain ATCC 23365 / NCTC 10854 / RM-666) protein is Porin Omp2b (omp2b).